We begin with the raw amino-acid sequence, 155 residues long: Non-secretory ribonuclease (155 aa).

A signal peptide spans 1 to 25; it reads MGPKLLESRLCLLLLLGLVLMLASC. Lys33 serves as a coordination point for substrate. Residue His38 is the Proton acceptor of the active site. Asn41 carries an N-linked (GlcNAc...) asparagine glycan. 4 disulfide bridges follow: Cys47-Cys106, Cys61-Cys118, Cys79-Cys133, and Cys86-Cys94. The residue at position 57 (Tyr57) is a 3'-nitrotyrosine. 62-66 is a binding site for substrate; it reads KDINT. 3 N-linked (GlcNAc...) asparagine glycosylation sites follow: Asn83, Asn88, and Asn107. His150 serves as the catalytic Proton donor.

The protein belongs to the pancreatic ribonuclease family. As to quaternary structure, interacts with and forms a tight 1:1 complex with RNH1. Dimerization of two such complexes may occur.

The protein localises to the lysosome. The protein resides in the cytoplasmic granule. The catalysed reaction is an [RNA] containing cytidine + H2O = an [RNA]-3'-cytidine-3'-phosphate + a 5'-hydroxy-ribonucleotide-3'-[RNA].. The enzyme catalyses an [RNA] containing uridine + H2O = an [RNA]-3'-uridine-3'-phosphate + a 5'-hydroxy-ribonucleotide-3'-[RNA].. Functionally, this is a non-secretory ribonuclease. It is a pyrimidine specific nuclease with a slight preference for U. Cytotoxin and helminthotoxin. Possesses a wide variety of biological activities. This is Non-secretory ribonuclease (Rnase2) from Mus musculus (Mouse).